Consider the following 274-residue polypeptide: MQQLQNVIESAFERRADITPANVDTVTREAVNQVIGLLDSGALRVAEKIDGQWVTHQWLKKAVLLSFRINDNKVMDGAETRYYDKVPMKFADYDEARFQKEGFRVVPPATVRQGAFIARNTVLMPSYVNIGAYVDEGTMVDTWATVGSCAQIGKNVHLSGGVGIGGVLEPLQANPTIIEDNCFIGARSEVVEGVIVEEGSVISMGVYLGQSTRIYDRETGEIHYGRVPAGSVVVSGNLPSKDGSYSLYCAVIVKKVDAKTRGKVGINELLRTID.

Substrate is bound by residues arginine 104 and aspartate 141.

Belongs to the transferase hexapeptide repeat family. Homotrimer.

The protein localises to the cytoplasm. The catalysed reaction is (S)-2,3,4,5-tetrahydrodipicolinate + succinyl-CoA + H2O = (S)-2-succinylamino-6-oxoheptanedioate + CoA. It participates in amino-acid biosynthesis; L-lysine biosynthesis via DAP pathway; LL-2,6-diaminopimelate from (S)-tetrahydrodipicolinate (succinylase route): step 1/3. Its activity is regulated as follows. Inhibited by p-(chloromercuri)benzenesulfonic acid and cobalt. The polypeptide is 2,3,4,5-tetrahydropyridine-2,6-dicarboxylate N-succinyltransferase (dapD) (Unknown prokaryotic organism).